Reading from the N-terminus, the 141-residue chain is Endoribonuclease YbeY (141 aa).

Zn(2+) contacts are provided by His-101, His-105, and His-111.

The protein belongs to the endoribonuclease YbeY family. Zn(2+) serves as cofactor.

It localises to the cytoplasm. Functionally, single strand-specific metallo-endoribonuclease involved in late-stage 70S ribosome quality control and in maturation of the 3' terminus of the 16S rRNA. This Nitrosomonas eutropha (strain DSM 101675 / C91 / Nm57) protein is Endoribonuclease YbeY.